The primary structure comprises 259 residues: Large ribosomal subunit protein uL4 (259 aa).

A disordered region spans residues 47–67; that stretch reads WGTDPMAGKRTTAESFGSGRG.

This sequence belongs to the universal ribosomal protein uL4 family. As to quaternary structure, part of the 50S ribosomal subunit.

One of the primary rRNA binding proteins, this protein initially binds near the 5'-end of the 23S rRNA. It is important during the early stages of 50S assembly. It makes multiple contacts with different domains of the 23S rRNA in the assembled 50S subunit and ribosome. Functionally, forms part of the polypeptide exit tunnel. The chain is Large ribosomal subunit protein uL4 from Methanosphaera stadtmanae (strain ATCC 43021 / DSM 3091 / JCM 11832 / MCB-3).